A 207-amino-acid chain; its full sequence is Guanylate kinase (207 aa).

The Guanylate kinase-like domain occupies 6–185; sequence GLLIVLSGPS…AKNRIQCIVE (180 aa). Residue 13–20 participates in ATP binding; the sequence is GPSGVGKG.

The protein belongs to the guanylate kinase family.

The protein resides in the cytoplasm. It catalyses the reaction GMP + ATP = GDP + ADP. Essential for recycling GMP and indirectly, cGMP. The protein is Guanylate kinase of Staphylococcus aureus (strain USA300).